A 468-amino-acid chain; its full sequence is Glutamyl-tRNA reductase (468 aa).

Substrate-binding positions include 49-52 (TCNR), S109, 114-116 (EQQ), and Q120. C50 serves as the catalytic Nucleophile. 189–194 (GAGAMG) serves as a coordination point for NADP(+). A disordered region spans residues 443–468 (VPSGFDAESRRGGGDMQSSPKRSPSN). The segment covering 458–468 (MQSSPKRSPSN) has biased composition (polar residues).

The protein belongs to the glutamyl-tRNA reductase family. In terms of assembly, homodimer.

It carries out the reaction (S)-4-amino-5-oxopentanoate + tRNA(Glu) + NADP(+) = L-glutamyl-tRNA(Glu) + NADPH + H(+). Its pathway is porphyrin-containing compound metabolism; protoporphyrin-IX biosynthesis; 5-aminolevulinate from L-glutamyl-tRNA(Glu): step 1/2. Functionally, catalyzes the NADPH-dependent reduction of glutamyl-tRNA(Glu) to glutamate 1-semialdehyde (GSA). In Mycobacterium tuberculosis (strain ATCC 25177 / H37Ra), this protein is Glutamyl-tRNA reductase.